Here is a 550-residue protein sequence, read N- to C-terminus: Hydroxylamine reductase (550 aa).

[2Fe-2S] cluster-binding residues include cysteine 3, cysteine 6, cysteine 18, and cysteine 25. Hybrid [4Fe-2O-2S] cluster is bound by residues histidine 249, glutamate 273, cysteine 317, cysteine 405, cysteine 433, cysteine 458, glutamate 492, and lysine 494. Cysteine 405 carries the post-translational modification Cysteine persulfide.

It belongs to the HCP family. [2Fe-2S] cluster serves as cofactor. Requires hybrid [4Fe-2O-2S] cluster as cofactor.

The protein localises to the cytoplasm. It catalyses the reaction A + NH4(+) + H2O = hydroxylamine + AH2 + H(+). Its function is as follows. Catalyzes the reduction of hydroxylamine to form NH(3) and H(2)O. This chain is Hydroxylamine reductase, found in Escherichia coli O7:K1 (strain IAI39 / ExPEC).